The following is a 155-amino-acid chain: 3-hydroxyacyl-[acyl-carrier-protein] dehydratase FabZ (155 aa).

Residue His59 is part of the active site.

The protein belongs to the thioester dehydratase family. FabZ subfamily.

Its subcellular location is the cytoplasm. It carries out the reaction a (3R)-hydroxyacyl-[ACP] = a (2E)-enoyl-[ACP] + H2O. Its function is as follows. Involved in unsaturated fatty acids biosynthesis. Catalyzes the dehydration of short chain beta-hydroxyacyl-ACPs and long chain saturated and unsaturated beta-hydroxyacyl-ACPs. This Bartonella henselae (strain ATCC 49882 / DSM 28221 / CCUG 30454 / Houston 1) (Rochalimaea henselae) protein is 3-hydroxyacyl-[acyl-carrier-protein] dehydratase FabZ.